Consider the following 433-residue polypeptide: Steroid C26-monooxygenase (433 aa).

G202 contacts substrate. C377 contacts heme.

It belongs to the cytochrome P450 family. Heme is required as a cofactor.

The catalysed reaction is cholest-4-en-3-one + 6 reduced [2Fe-2S]-[ferredoxin] + 3 O2 + 5 H(+) = (25S)-3-oxocholest-4-en-26-oate + 6 oxidized [2Fe-2S]-[ferredoxin] + 4 H2O. The protein operates within steroid metabolism; cholesterol degradation. Involved in the utilization of cholesterol as the sole carbon and energy source by degrading the side chain during infection. Primarily catalyzes the sequential oxidation of the terminal methyl of cholest-4-en-3-one into (25S)-26-hydroxycholest-4-en-3-one (alcohol), (25S)-26-oxocholest-4-en-3-one (aldehyde), to finally yield the carboxylic acid (25S)-3-oxocholest-4-en-26-oate. Also able to sequentially oxidize cholesterol itself, not only cholest-4-en-3-one. The protein is Steroid C26-monooxygenase (cyp125) of Mycobacterium bovis (strain ATCC BAA-935 / AF2122/97).